The chain runs to 923 residues: MERGLPLLCAVLALVLAPAGAFRNDKCGDTIKIESPGYLTSPGYPHSYHPSEKCEWLIQAPDPYQRIMINFNPHFDLEDRDCKYDYVEVFDGENENGHFRGKFCGKIAPPPVVSSGPFLFIKFVSDYETHGAGFSIRYEIFKRGPECSQNYTTPSGVIKSPGFPEKYPNSLECTYIVFVPKMSEIILEFESFDLEPDSNPPGGMFCRYDRLEIWDGFPDVGPHIGRYCGQKTPGRIRSSSGILSMVFYTDSAIAKEGFSANYSVLQSSVSEDFKCMEALGMESGEIHSDQITASSQYSTNWSAERSRLNYPENGWTPGEDSYREWIQVDLGLLRFVTAVGTQGAISKETKKKYYVKTYKIDVSSNGEDWITIKEGNKPVLFQGNTNPTDVVVAVFPKPLITRFVRIKPATWETGISMRFEVYGCKITDYPCSGMLGMVSGLISDSQITSSNQGDRNWMPENIRLVTSRSGWALPPAPHSYINEWLQIDLGEEKIVRGIIIQGGKHRENKVFMRKFKIGYSNNGSDWKMIMDDSKRKAKSFEGNNNYDTPELRTFPALSTRFIRIYPERATHGGLGLRMELLGCEVEAPTAGPTTPNGNLVDECDDDQANCHSGTGDDFQLTGGTTVLATEKPTVIDSTIQSEFPTYGFNCEFGWGSHKTFCHWEHDNHVQLKWSVLTSKTGPIQDHTGDGNFIYSQADENQKGKVARLVSPVVYSQNSAHCMTFWYHMSGSHVGTLRVKLRYQKPEEYDQLVWMAIGHQGDHWKEGRVLLHKSLKLYQVIFEGEIGKGNLGGIAVDDISINNHISQEDCAKPADLDKKNPEIKIDETGSTPGYEGEGEGDKNISRKPGNVLKTLDPILITIIAMSALGVLLGAVCGVVLYCACWHNGMSERNLSALENYNFELVDGVKLKKDKLNTQSTYSEA.

The N-terminal stretch at 1 to 21 is a signal peptide; that stretch reads MERGLPLLCAVLALVLAPAGA. The Extracellular portion of the chain corresponds to 22–856; the sequence is FRNDKCGDTI…PGNVLKTLDP (835 aa). 3 cysteine pairs are disulfide-bonded: Cys27–Cys54, Cys82–Cys104, and Cys147–Cys173. CUB domains lie at 27 to 141 and 147 to 265; these read CGDT…YEIF and CSQN…YSVL. Asn150 carries an N-linked (GlcNAc...) asparagine glycan. The Ca(2+) site is built by Glu195, Asp209, and Asp250. Residues Cys206 and Cys228 are joined by a disulfide bond. N-linked (GlcNAc...) asparagine glycosylation is found at Asn261, Asn300, and Asn522. 2 cysteine pairs are disulfide-bonded: Cys275–Cys424 and Cys431–Cys583. F5/8 type C domains lie at 275–424 and 431–583; these read CMEA…VYGC and CSGM…LLGC. Ser612 carries O-linked (Xyl...) (chondroitin sulfate) serine; alternate glycosylation. Ser612 carries O-linked (Xyl...) (heparan sulfate) serine; alternate glycosylation. The region spanning 645–811 is the MAM domain; it reads TYGFNCEFGW…NHISQEDCAK (167 aa). The tract at residues 820–845 is disordered; that stretch reads PEIKIDETGSTPGYEGEGEGDKNISR. Residue Ser829 is glycosylated (O-linked (Xyl...) (chondroitin sulfate) serine). N-linked (GlcNAc...) asparagine glycosylation occurs at Asn842. Residues 857 to 879 form a helical membrane-spanning segment; sequence ILITIIAMSALGVLLGAVCGVVL. Residues 880–923 lie on the Cytoplasmic side of the membrane; sequence YCACWHNGMSERNLSALENYNFELVDGVKLKKDKLNTQSTYSEA. Ser894 carries the phosphoserine modification.

This sequence belongs to the neuropilin family. In terms of assembly, homodimer, and heterodimer with NRP2. Interacts with FER. Interacts with PLXNB1. Interacts with VEGFA. Interacts with ABCB8/MITOSUR in mitochondria. As to quaternary structure, (Microbial infection) Interacts with SARS coronavirus-2/SARS-CoV-2 spike protein S1 (via the CendR motif RRAR). The expression of isoforms 1 and 2 does not seem to overlap. Expressed in olfactory epithelium (at protein level). Expressed in fibroblasts (at protein level). Expressed by the blood vessels of different tissues. In the developing embryo it is found predominantly in the nervous system. In adult tissues, it is highly expressed in heart and placenta; moderately in lung, liver, skeletal muscle, kidney and pancreas; and low in adult brain. Expressed in the central nervous system, including olfactory related regions such as the olfactory tubercles and paraolfactory gyri. As to expression, the expression of isoforms 1 and 2 does not seem to overlap. Found in liver hepatocytes, kidney distal and proximal tubules.

The protein localises to the secreted. Its subcellular location is the mitochondrion membrane. The protein resides in the cell membrane. It is found in the cytoplasm. Its function is as follows. Cell-surface receptor involved in the development of the cardiovascular system, in angiogenesis, in the formation of certain neuronal circuits and in organogenesis outside the nervous system. Mediates the chemorepulsant activity of semaphorins. Recognizes a C-end rule (CendR) motif R/KXXR/K on its ligands which causes cellular internalization and vascular leakage. It binds to semaphorin 3A, the PLGF-2 isoform of PGF, the VEGF165 isoform of VEGFA and VEGFB. Coexpression with KDR results in increased VEGF165 binding to KDR as well as increased chemotaxis. Regulates VEGF-induced angiogenesis. Binding to VEGFA initiates a signaling pathway needed for motor neuron axon guidance and cell body migration, including for the caudal migration of facial motor neurons from rhombomere 4 to rhombomere 6 during embryonic development. Regulates mitochondrial iron transport via interaction with ABCB8/MITOSUR. (Microbial infection) Acts as a host factor for human coronavirus SARS-CoV-2 infection. Recognizes and binds to CendR motif RRAR on SARS-CoV-2 spike protein S1 which enhances SARS-CoV-2 infection. In terms of biological role, binds VEGF-165 and may inhibit its binding to cells. May induce apoptosis by sequestering VEGF-165. May bind as well various members of the semaphorin family. Its expression has an averse effect on blood vessel number and integrity. This is Neuropilin-1 from Homo sapiens (Human).